The chain runs to 265 residues: Very long chain fatty acid elongase 6 (265 aa).

Residue asparagine 2 is glycosylated (N-linked (GlcNAc...) asparagine). 7 consecutive transmembrane segments (helical) span residues phenylalanine 34 to methionine 51, leucine 70 to methionine 90, phenylalanine 111 to isoleucine 131, leucine 137 to tyrosine 156, methionine 159 to serine 179, phenylalanine 197 to phenylalanine 217, and isoleucine 232 to glutamate 252.

Belongs to the ELO family. ELOVL6 subfamily. N-Glycosylated.

The protein localises to the endoplasmic reticulum membrane. The enzyme catalyses a very-long-chain acyl-CoA + malonyl-CoA + H(+) = a very-long-chain 3-oxoacyl-CoA + CO2 + CoA. It carries out the reaction hexadecanoyl-CoA + malonyl-CoA + H(+) = 3-oxooctadecanoyl-CoA + CO2 + CoA. It catalyses the reaction (9Z)-hexadecenoyl-CoA + malonyl-CoA + H(+) = 3-oxo-(11Z)-octadecenoyl-CoA + CO2 + CoA. The catalysed reaction is dodecanoyl-CoA + malonyl-CoA + H(+) = 3-oxotetradecanoyl-CoA + CO2 + CoA. The enzyme catalyses tetradecanoyl-CoA + malonyl-CoA + H(+) = 3-oxohexadecanoyl-CoA + CO2 + CoA. It carries out the reaction (9Z)-octadecenoyl-CoA + malonyl-CoA + H(+) = 3-oxo-(11Z)-eicosenoyl-CoA + CO2 + CoA. It catalyses the reaction (9Z,12Z)-octadecadienoyl-CoA + malonyl-CoA + H(+) = (11Z,14Z)-3-oxoicosa-11,14-dienoyl-CoA + CO2 + CoA. The catalysed reaction is (9Z,12Z,15Z)-octadecatrienoyl-CoA + malonyl-CoA + H(+) = (11Z,14Z,17Z)-3-oxoeicosatrienoyl-CoA + CO2 + CoA. It functions in the pathway lipid metabolism; fatty acid biosynthesis. Its activity is regulated as follows. The reaction is stimulated by the presence of HSD17B12, the enzyme catalyzing the second step of the elongation cycle. Functionally, catalyzes the first and rate-limiting reaction of the four reactions that constitute the long-chain fatty acids elongation cycle. This endoplasmic reticulum-bound enzymatic process allows the addition of 2 carbons to the chain of long- and very long-chain fatty acids (VLCFAs) per cycle. Condensing enzyme that elongates fatty acids with 12, 14 and 16 carbons with higher activity toward C16:0 acyl-CoAs. Catalyzes the synthesis of unsaturated C16 long chain fatty acids and, to a lesser extent, C18:0 and those with low desaturation degree. May participate in the production of saturated and monounsaturated VLCFAs of different chain lengths that are involved in multiple biological processes as precursors of membrane lipids and lipid mediators. This is Very long chain fatty acid elongase 6 from Gallus gallus (Chicken).